The sequence spans 156 residues: ATP synthase subunit b (156 aa).

A helical transmembrane segment spans residues 7–29 (LLGQAISFAMFVWFCMKYVWPPI).

It belongs to the ATPase B chain family. As to quaternary structure, F-type ATPases have 2 components, F(1) - the catalytic core - and F(0) - the membrane proton channel. F(1) has five subunits: alpha(3), beta(3), gamma(1), delta(1), epsilon(1). F(0) has three main subunits: a(1), b(2) and c(10-14). The alpha and beta chains form an alternating ring which encloses part of the gamma chain. F(1) is attached to F(0) by a central stalk formed by the gamma and epsilon chains, while a peripheral stalk is formed by the delta and b chains.

It is found in the cell inner membrane. Functionally, f(1)F(0) ATP synthase produces ATP from ADP in the presence of a proton or sodium gradient. F-type ATPases consist of two structural domains, F(1) containing the extramembraneous catalytic core and F(0) containing the membrane proton channel, linked together by a central stalk and a peripheral stalk. During catalysis, ATP synthesis in the catalytic domain of F(1) is coupled via a rotary mechanism of the central stalk subunits to proton translocation. Its function is as follows. Component of the F(0) channel, it forms part of the peripheral stalk, linking F(1) to F(0). This chain is ATP synthase subunit b, found in Vibrio vulnificus (strain CMCP6).